The following is a 92-amino-acid chain: Small ribosomal subunit protein uS19 (92 aa).

Belongs to the universal ribosomal protein uS19 family.

In terms of biological role, protein S19 forms a complex with S13 that binds strongly to the 16S ribosomal RNA. In Rickettsia akari (strain Hartford), this protein is Small ribosomal subunit protein uS19.